Here is a 366-residue protein sequence, read N- to C-terminus: Chorismate synthase (366 aa).

NADP(+) is bound by residues arginine 48 and arginine 54. Residues 125–127, 238–239, glycine 278, 293–297, and arginine 319 contribute to the FMN site; these read RSS, NA, and KPTSS.

The protein belongs to the chorismate synthase family. In terms of assembly, homotetramer. It depends on FMNH2 as a cofactor.

It carries out the reaction 5-O-(1-carboxyvinyl)-3-phosphoshikimate = chorismate + phosphate. It functions in the pathway metabolic intermediate biosynthesis; chorismate biosynthesis; chorismate from D-erythrose 4-phosphate and phosphoenolpyruvate: step 7/7. Its function is as follows. Catalyzes the anti-1,4-elimination of the C-3 phosphate and the C-6 proR hydrogen from 5-enolpyruvylshikimate-3-phosphate (EPSP) to yield chorismate, which is the branch point compound that serves as the starting substrate for the three terminal pathways of aromatic amino acid biosynthesis. This reaction introduces a second double bond into the aromatic ring system. The polypeptide is Chorismate synthase (Laribacter hongkongensis (strain HLHK9)).